We begin with the raw amino-acid sequence, 223 residues long: Uracil-DNA glycosylase (223 aa).

D61 acts as the Proton acceptor in catalysis.

This sequence belongs to the uracil-DNA glycosylase (UDG) superfamily. UNG family.

Its subcellular location is the cytoplasm. The catalysed reaction is Hydrolyzes single-stranded DNA or mismatched double-stranded DNA and polynucleotides, releasing free uracil.. Its function is as follows. Excises uracil residues from the DNA which can arise as a result of misincorporation of dUMP residues by DNA polymerase or due to deamination of cytosine. In Histophilus somni (strain 129Pt) (Haemophilus somnus), this protein is Uracil-DNA glycosylase.